The sequence spans 251 residues: Imidazole glycerol phosphate synthase subunit HisF (251 aa).

Catalysis depends on residues Asp-11 and Asp-130.

Belongs to the HisA/HisF family. Heterodimer of HisH and HisF.

Its subcellular location is the cytoplasm. It catalyses the reaction 5-[(5-phospho-1-deoxy-D-ribulos-1-ylimino)methylamino]-1-(5-phospho-beta-D-ribosyl)imidazole-4-carboxamide + L-glutamine = D-erythro-1-(imidazol-4-yl)glycerol 3-phosphate + 5-amino-1-(5-phospho-beta-D-ribosyl)imidazole-4-carboxamide + L-glutamate + H(+). It participates in amino-acid biosynthesis; L-histidine biosynthesis; L-histidine from 5-phospho-alpha-D-ribose 1-diphosphate: step 5/9. Its function is as follows. IGPS catalyzes the conversion of PRFAR and glutamine to IGP, AICAR and glutamate. The HisF subunit catalyzes the cyclization activity that produces IGP and AICAR from PRFAR using the ammonia provided by the HisH subunit. The protein is Imidazole glycerol phosphate synthase subunit HisF of Listeria welshimeri serovar 6b (strain ATCC 35897 / DSM 20650 / CCUG 15529 / CIP 8149 / NCTC 11857 / SLCC 5334 / V8).